We begin with the raw amino-acid sequence, 150 residues long: MKVIFTEDVKGRGKRGEIKNVPDGYAQNFLIPRGKAKEANKAAMSELAGQERSREKHEAEELAAAKELKKVLEDDKTVVELTGKAGTDGRMFGSVSTKQIATALEKQYQIKLDKRKMELAAPIRALGYVNVPVKLHHDVEATLRVHIAEK.

This sequence belongs to the bacterial ribosomal protein bL9 family.

Its function is as follows. Binds to the 23S rRNA. This Limosilactobacillus fermentum (strain NBRC 3956 / LMG 18251) (Lactobacillus fermentum) protein is Large ribosomal subunit protein bL9.